The primary structure comprises 596 residues: Elongation factor 4 (596 aa).

One can recognise a tr-type G domain in the interval 2–184; sequence KNIRNFSIIA…TIVKNIPSPA (183 aa). Residues 14–19 and 131–134 each bind GTP; these read DHGKST and NKID.

This sequence belongs to the TRAFAC class translation factor GTPase superfamily. Classic translation factor GTPase family. LepA subfamily.

Its subcellular location is the cell inner membrane. It carries out the reaction GTP + H2O = GDP + phosphate + H(+). In terms of biological role, required for accurate and efficient protein synthesis under certain stress conditions. May act as a fidelity factor of the translation reaction, by catalyzing a one-codon backward translocation of tRNAs on improperly translocated ribosomes. Back-translocation proceeds from a post-translocation (POST) complex to a pre-translocation (PRE) complex, thus giving elongation factor G a second chance to translocate the tRNAs correctly. Binds to ribosomes in a GTP-dependent manner. The sequence is that of Elongation factor 4 from Colwellia psychrerythraea (strain 34H / ATCC BAA-681) (Vibrio psychroerythus).